Consider the following 293-residue polypeptide: Carbapenem-hydrolyzing beta-lactamase KPC (293 aa).

The N-terminal stretch at 1-24 is a signal peptide; that stretch reads MSLYRRLVLLSCLSWPLAGFSATA. Ser-69 serves as the catalytic Acyl-ester intermediate. The active-site Proton acceptor is the Glu-167. 233-235 contributes to the substrate binding site; the sequence is KTG.

The protein belongs to the class-A beta-lactamase family.

The catalysed reaction is a beta-lactam + H2O = a substituted beta-amino acid. Its activity is regulated as follows. Not inhibited by EDTA, inhibited by clavulanic acid and tazobactam. Its function is as follows. Hydrolyzes carbapenems, penicillins, cephalosporins and aztreonam with varying efficiency. This chain is Carbapenem-hydrolyzing beta-lactamase KPC (bla), found in Klebsiella oxytoca.